We begin with the raw amino-acid sequence, 1429 residues long: Nitric oxide synthase 1 (1429 aa).

An interaction with NOSIP region spans residues 1 to 200 (MEEHTFGVQQ…LQDSGEQDEL (200 aa)). The PDZ domain maps to 17–99 (SVRLFKRKVG…ETHVVLILRG (83 aa)). 2 disordered regions span residues 114–174 (DGTP…SVSQ) and 271–298 (NNPY…SRCP). An interaction with DYNLL1/PIN region spans residues 163 to 240 (QGRGQGAGSV…TGIQVDRDLD (78 aa)). The segment covering 272 to 294 (NPYSENEQSPASGKQSPTKNGSP) has biased composition (polar residues). Serine 280 is modified (phosphoserine). A (6R)-L-erythro-5,6,7,8-tetrahydrobiopterin-binding site is contributed by serine 334. Cysteine 415 is a heme b binding site. Glutamine 478, tryptophan 587, tyrosine 588, and glutamate 592 together coordinate L-arginine. (6R)-L-erythro-5,6,7,8-tetrahydrobiopterin-binding residues include valine 677, tryptophan 678, and phenylalanine 691. Tyrosine 706 contacts heme b. The tract at residues 725-745 (KRRAIGFKKLAEAVKFSAKLM) is calmodulin-binding. Residues 755 to 935 (ATILYATETG…AFRTWAKKVF (181 aa)) form the Flavodoxin-like domain. Threonine 761, glutamate 762, threonine 763, lysine 765, serine 766, serine 807, threonine 808, and glycine 812 together coordinate FMN. 3 positions are modified to phosphoserine: serine 847, serine 857, and serine 858. FMN-binding residues include serine 886, histidine 891, cysteine 893, glutamate 919, and glutamine 923. One can recognise an FAD-binding FR-type domain in the interval 990–1237 (KRVSAARLLS…VRGAPSFHLP (248 aa)). Arginine 1010 contacts NADP(+). The FAD site is built by histidine 1032, arginine 1173, tyrosine 1174, tyrosine 1175, serine 1176, threonine 1191, and alanine 1193. Serine 1196 is a binding site for NADP(+). The FAD site is built by tyrosine 1197, valine 1210, cysteine 1211, and serine 1212. 10 residues coordinate NADP(+): threonine 1251, arginine 1284, serine 1313, arginine 1314, lysine 1320, tyrosine 1322, glutamine 1324, aspartate 1357, threonine 1398, and arginine 1400.

It belongs to the NOS family. As to quaternary structure, homodimer. Interacts with DLG4; the interaction possibly being prevented by the association between NOS1 and CAPON. Forms a ternary complex with CAPON and RASD1. Forms a ternary complex with CAPON and SYN1. Interacts with ZDHHC23. Interacts with NOSIP; which may impair its synaptic location. Interacts with HTR4. Interacts with VAC14. Interacts (via N-terminal domain) with DLG4 (via N-terminal tandem pair of PDZ domains). Interacts with SLC6A4. Forms a complex with ASL, ASS1 and SLC7A1; the complex regulates cell-autonomous L-arginine synthesis and citrulline recycling while channeling extracellular L-arginine to nitric oxide synthesis pathway. Interacts with DMD; localizes NOS1 to sarcolemma in muscle cells. Interacts with DYNLL1; inhibits the nitric oxide synthase activity. The cofactor is heme b. FAD is required as a cofactor. Requires FMN as cofactor. (6R)-L-erythro-5,6,7,8-tetrahydrobiopterin serves as cofactor. In terms of processing, ubiquitinated; mediated by STUB1/CHIP in the presence of Hsp70 and Hsp40 (in vitro). In terms of tissue distribution, widely expressed in the nervous system: expressed in cerebrum, olfactory bulb, hippocampus, midbrain, cerebellum, pons, medulla oblongata, and spinal cord. Also found in skeletal muscle, where it is localized beneath the sarcolemma of fast twitch muscle fibers, and in spleen, heart, kidney, and liver. N-NOS-1 and N-NOS-2 are found in all parts of the nervous system. NNOS beta and gamma occur in a region-specific manner in the brain and NNOS beta expression is developmentally regulated. NNOS Mu is only found in mature skeletal and cardiac muscles.

Its subcellular location is the cell membrane. It is found in the sarcolemma. The protein resides in the cell projection. It localises to the dendritic spine. The enzyme catalyses 2 L-arginine + 3 NADPH + 4 O2 + H(+) = 2 L-citrulline + 2 nitric oxide + 3 NADP(+) + 4 H2O. Its activity is regulated as follows. Stimulated by calcium/calmodulin. Inhibited by DYNLL1 that prevents the dimerization of the protein. Inhibited by NOSIP. Its function is as follows. Produces nitric oxide (NO) which is a messenger molecule with diverse functions throughout the body. In the brain and peripheral nervous system, NO displays many properties of a neurotransmitter. Probably has nitrosylase activity and mediates cysteine S-nitrosylation of cytoplasmic target proteins such SRR. Isoform NNOS Mu may be an effector enzyme for the dystrophin complex. This Mus musculus (Mouse) protein is Nitric oxide synthase 1.